The sequence spans 1041 residues: Integrator complex subunit 3 (1041 aa).

M1 is subject to N-acetylmethionine. S500, S535, and S993 each carry phosphoserine. The interval 975 to 1041 is disordered; that stretch reads YEDSSTKPPK…GSSAVGSDSD (67 aa). Residues 1006-1020 are compositionally biased toward acidic residues; sequence AEEESGSSSASEEED.

This sequence belongs to the Integrator subunit 3 family. In terms of assembly, component of the Integrator complex, composed of core subunits INTS1, INTS2, INTS3, INTS4, INTS5, INTS6, INTS7, INTS8, INTS9/RC74, INTS10, INTS11/CPSF3L, INTS12, INTS13, INTS14 and INTS15. The core complex associates with protein phosphatase 2A subunits PPP2CA and PPP2R1A, to form the Integrator-PP2A (INTAC) complex. Component of the SOSS complex, composed of SOSS-B (SOSS-B1/NABP2 or SOSS-B2/NABP1), SOSS-A/INTS3 and SOSS-C/INIP. SOSS complexes containing SOSS-B1/NABP2 are more abundant than complexes containing SOSS-B2/NABP1. Interacts with SOSS-B1/NABP2, SOSS-B2/NABP1 and SOSS-C/INIP; the interaction is direct. Interacts with NBN/NBS1.

It localises to the nucleus. The protein localises to the cytoplasm. Its function is as follows. Component of the integrator complex, a multiprotein complex that terminates RNA polymerase II (Pol II) transcription in the promoter-proximal region of genes. The integrator complex provides a quality checkpoint during transcription elongation by driving premature transcription termination of transcripts that are unfavorably configured for transcriptional elongation: the complex terminates transcription by (1) catalyzing dephosphorylation of the C-terminal domain (CTD) of Pol II subunit POLR2A/RPB1 and SUPT5H/SPT5, (2) degrading the exiting nascent RNA transcript via endonuclease activity and (3) promoting the release of Pol II from bound DNA. The integrator complex is also involved in terminating the synthesis of non-coding Pol II transcripts, such as enhancer RNAs (eRNAs), small nuclear RNAs (snRNAs), telomerase RNAs and long non-coding RNAs (lncRNAs). Within the integrator complex, INTS3 is involved in the post-termination step: INTS3 binds INTS7 in the open conformation of integrator complex and prevents the rebinding of Pol II to the integrator after termination cycle. Mediates recruitment of cytoplasmic dynein to the nuclear envelope, probably as component of the integrator complex. Functionally, component of the SOSS complex, a multiprotein complex that functions downstream of the MRN complex to promote DNA repair and G2/M checkpoint. The SOSS complex associates with single-stranded DNA at DNA lesions and influences diverse endpoints in the cellular DNA damage response including cell-cycle checkpoint activation, recombinational repair and maintenance of genomic stability. The SOSS complex is required for efficient homologous recombination-dependent repair of double-strand breaks (DSBs) and ATM-dependent signaling pathways. In the SOSS complex, it is required for the assembly of the complex and for stabilization of the complex at DNA damage sites. This is Integrator complex subunit 3 (Ints3) from Mus musculus (Mouse).